We begin with the raw amino-acid sequence, 269 residues long: Iron(3+)-hydroxamate import ATP-binding protein FhuC (269 aa).

In terms of domain architecture, ABC transporter spans 4 to 240 (LSTEQLGIGY…DILKQVFQID (237 aa)). ATP-binding positions include 36 to 43 (GPNGCGKS) and 160 to 171 (LLLLDEPTTYLD).

The protein belongs to the ABC transporter superfamily. Iron (Fe3+)-hydroxamate importer (TC 3.A.1.14.7) family. As to quaternary structure, the complex is composed of an ATP-binding protein (FhuC), two transmembrane proteins (FhuB and FhuG) and a solute-binding protein (FhuD or YxeB).

It is found in the cell membrane. It catalyses the reaction ATP + H2O + Fe(3+)-hydroxamate complex-[hydroxamate-binding protein]Side 1 = ADP + phosphate + Fe(3+)-hydroxamate complexSide 2 + [hydroxamate-binding protein]Side 1.. Its function is as follows. Part of the ABC transporter complex FhuBGCD involved in iron(3+)-hydroxamate import. Responsible for energy coupling to the transport system. This chain is Iron(3+)-hydroxamate import ATP-binding protein FhuC (fhuC), found in Bacillus subtilis (strain 168).